The chain runs to 121 residues: Large ribosomal subunit protein uL14 (121 aa).

This sequence belongs to the universal ribosomal protein uL14 family. Part of the 50S ribosomal subunit. Forms a cluster with proteins L3 and L19. In the 70S ribosome, L14 and L19 interact and together make contacts with the 16S rRNA in bridges B5 and B8.

Binds to 23S rRNA. Forms part of two intersubunit bridges in the 70S ribosome. The protein is Large ribosomal subunit protein uL14 of Azobacteroides pseudotrichonymphae genomovar. CFP2.